Here is a 348-residue protein sequence, read N- to C-terminus: Holliday junction branch migration complex subunit RuvB (348 aa).

The large ATPase domain (RuvB-L) stretch occupies residues 1–183; that stretch reads MTDPSRLVTP…FGIPVRLNFY (183 aa). ATP-binding positions include leucine 22, arginine 23, glycine 64, lysine 67, threonine 68, threonine 69, 130–132, arginine 173, tyrosine 183, and arginine 220; that span reads EDF. Threonine 68 is a binding site for Mg(2+). Residues 184-254 form a small ATPAse domain (RuvB-S) region; sequence TIEELESIVS…IADHALGALE (71 aa). The segment at 257–348 is head domain (RuvB-H); it reads AAGLDAMDRR…FGLFGGEEEA (92 aa). Residues arginine 293, arginine 312, and arginine 317 each coordinate DNA.

This sequence belongs to the RuvB family. As to quaternary structure, homohexamer. Forms an RuvA(8)-RuvB(12)-Holliday junction (HJ) complex. HJ DNA is sandwiched between 2 RuvA tetramers; dsDNA enters through RuvA and exits via RuvB. An RuvB hexamer assembles on each DNA strand where it exits the tetramer. Each RuvB hexamer is contacted by two RuvA subunits (via domain III) on 2 adjacent RuvB subunits; this complex drives branch migration. In the full resolvosome a probable DNA-RuvA(4)-RuvB(12)-RuvC(2) complex forms which resolves the HJ.

Its subcellular location is the cytoplasm. The catalysed reaction is ATP + H2O = ADP + phosphate + H(+). In terms of biological role, the RuvA-RuvB-RuvC complex processes Holliday junction (HJ) DNA during genetic recombination and DNA repair, while the RuvA-RuvB complex plays an important role in the rescue of blocked DNA replication forks via replication fork reversal (RFR). RuvA specifically binds to HJ cruciform DNA, conferring on it an open structure. The RuvB hexamer acts as an ATP-dependent pump, pulling dsDNA into and through the RuvAB complex. RuvB forms 2 homohexamers on either side of HJ DNA bound by 1 or 2 RuvA tetramers; 4 subunits per hexamer contact DNA at a time. Coordinated motions by a converter formed by DNA-disengaged RuvB subunits stimulates ATP hydrolysis and nucleotide exchange. Immobilization of the converter enables RuvB to convert the ATP-contained energy into a lever motion, pulling 2 nucleotides of DNA out of the RuvA tetramer per ATP hydrolyzed, thus driving DNA branch migration. The RuvB motors rotate together with the DNA substrate, which together with the progressing nucleotide cycle form the mechanistic basis for DNA recombination by continuous HJ branch migration. Branch migration allows RuvC to scan DNA until it finds its consensus sequence, where it cleaves and resolves cruciform DNA. This chain is Holliday junction branch migration complex subunit RuvB, found in Rhodopseudomonas palustris (strain HaA2).